The primary structure comprises 417 residues: RH-like protein (417 aa).

Helical transmembrane passes span 12-32 (CLPL…FFFT), 44-64 (LVAS…GLGF), 77-97 (VAFN…LDGF), 125-145 (ISMN…MELV), 172-192 (IHVF…KPLP), 203-223 (TSPS…WPTF), 238-258 (VFST…VSSL), 265-285 (INMT…SASC), 287-307 (VIHS…ISIG), 331-351 (TFGL…ALRV), and 358-378 (MIGF…AMSI).

The protein belongs to the ammonium transporter (TC 2.A.49) family. Rh subfamily.

The protein localises to the membrane. Its function is as follows. May be part of an oligomeric complex which is likely to have a transport or channel function in the erythrocyte membrane. This chain is RH-like protein, found in Macaca mulatta (Rhesus macaque).